We begin with the raw amino-acid sequence, 745 residues long: Polyribonucleotide nucleotidyltransferase (745 aa).

Residues Asp487 and Asp493 each contribute to the Mg(2+) site. The 60-residue stretch at 554–613 (PSSTTVKIDKDKIKDIIGPGGKIIKEICETSNAKIDISDDGTVSIYASDRDKIKIALDKI) folds into the KH domain. The 69-residue stretch at 623-691 (GEIFNGTVMK…NKGKAKLTIK (69 aa)) folds into the S1 motif domain. Positions 693–732 (AYKDHSSNNTKQKNNVKDDSESEQRRDTSKKRTWNEDNNT) are disordered. The span at 707–719 (NVKDDSESEQRRD) shows a compositional bias: basic and acidic residues.

This sequence belongs to the polyribonucleotide nucleotidyltransferase family. It depends on Mg(2+) as a cofactor.

The protein localises to the cytoplasm. It carries out the reaction RNA(n+1) + phosphate = RNA(n) + a ribonucleoside 5'-diphosphate. Involved in mRNA degradation. Catalyzes the phosphorolysis of single-stranded polyribonucleotides processively in the 3'- to 5'-direction. This chain is Polyribonucleotide nucleotidyltransferase, found in Rickettsia prowazekii (strain Madrid E).